A 189-amino-acid polypeptide reads, in one-letter code: Ornithine decarboxylase antizyme 2 (189 aa).

Phosphoserine is present on Ser-186.

This sequence belongs to the ODC antizyme family. In terms of assembly, interacts with ODC1 and thereby sterically blocks ODC homodimerization. Interacts with AZIN2; this interaction disrupts the interaction between the antizyme and ODC1.

Its subcellular location is the nucleus. In terms of biological role, ornithine decarboxylase (ODC) antizyme protein that negatively regulates ODC activity and intracellular polyamine biosynthesis and uptake in response to increased intracellular polyamine levels. Binds to ODC monomers, inhibiting the assembly of the functional ODC homodimers. Does not target the ODC monomers for degradation, which allows a protein synthesis-independent restoration of ODC activity. Involved in the translocation of AZIN2 from ER-Golgi intermediate compartment (ERGIC) to the cytosol. The chain is Ornithine decarboxylase antizyme 2 (Oaz2) from Mus musculus (Mouse).